A 208-amino-acid polypeptide reads, in one-letter code: Large ribosomal subunit protein bL25 (208 aa).

This sequence belongs to the bacterial ribosomal protein bL25 family. CTC subfamily. In terms of assembly, part of the 50S ribosomal subunit; part of the 5S rRNA/L5/L18/L25 subcomplex. Contacts the 5S rRNA. Binds to the 5S rRNA independently of L5 and L18.

This is one of the proteins that binds to the 5S RNA in the ribosome where it forms part of the central protuberance. This chain is Large ribosomal subunit protein bL25, found in Acidovorax ebreus (strain TPSY) (Diaphorobacter sp. (strain TPSY)).